A 415-amino-acid polypeptide reads, in one-letter code: Queuine tRNA-ribosyltransferase accessory subunit 2 (415 aa).

Residues Cys351, Cys353, Cys356, and His382 each contribute to the Zn(2+) site.

Belongs to the queuine tRNA-ribosyltransferase family. QTRT2 subfamily. In terms of assembly, heterodimer of a catalytic subunit QTRT1 and an accessory subunit QTRT2. The cofactor is Zn(2+).

Its subcellular location is the cytoplasm. The protein localises to the mitochondrion outer membrane. Non-catalytic subunit of the queuine tRNA-ribosyltransferase (TGT) that catalyzes the base-exchange of a guanine (G) residue with queuine (Q) at position 34 (anticodon wobble position) in tRNAs with GU(N) anticodons (tRNA-Asp, -Asn, -His and -Tyr), resulting in the hypermodified nucleoside queuosine (7-(((4,5-cis-dihydroxy-2-cyclopenten-1-yl)amino)methyl)-7-deazaguanosine). In Pongo abelii (Sumatran orangutan), this protein is Queuine tRNA-ribosyltransferase accessory subunit 2.